Consider the following 348-residue polypeptide: tRNA N6-adenosine threonylcarbamoyltransferase (348 aa).

Fe cation contacts are provided by His116 and His120. Residues 138 to 142, Asp171, Gly184, Asp188, and Asn277 each bind substrate; that span reads QVSGG. Asp309 serves as a coordination point for Fe cation.

The protein belongs to the KAE1 / TsaD family. Fe(2+) serves as cofactor.

It localises to the cytoplasm. It carries out the reaction L-threonylcarbamoyladenylate + adenosine(37) in tRNA = N(6)-L-threonylcarbamoyladenosine(37) in tRNA + AMP + H(+). In terms of biological role, required for the formation of a threonylcarbamoyl group on adenosine at position 37 (t(6)A37) in tRNAs that read codons beginning with adenine. Is involved in the transfer of the threonylcarbamoyl moiety of threonylcarbamoyl-AMP (TC-AMP) to the N6 group of A37, together with TsaE and TsaB. TsaD likely plays a direct catalytic role in this reaction. The chain is tRNA N6-adenosine threonylcarbamoyltransferase from Lactobacillus johnsonii (strain CNCM I-12250 / La1 / NCC 533).